A 432-amino-acid chain; its full sequence is 3-phosphoshikimate 1-carboxyvinyltransferase (432 aa).

Positions 22, 23, and 27 each coordinate 3-phosphoshikimate. Residue Lys22 participates in phosphoenolpyruvate binding. Phosphoenolpyruvate is bound by residues Gly96 and Arg127. 3-phosphoshikimate is bound by residues Ser173, Ser174, Gln175, Ser201, Asp316, Asn339, and Lys343. Phosphoenolpyruvate is bound at residue Gln175. Asp316 acts as the Proton acceptor in catalysis. Phosphoenolpyruvate is bound by residues Arg347, Arg391, and Lys416.

The protein belongs to the EPSP synthase family. Monomer.

It is found in the cytoplasm. The enzyme catalyses 3-phosphoshikimate + phosphoenolpyruvate = 5-O-(1-carboxyvinyl)-3-phosphoshikimate + phosphate. It participates in metabolic intermediate biosynthesis; chorismate biosynthesis; chorismate from D-erythrose 4-phosphate and phosphoenolpyruvate: step 6/7. In terms of biological role, catalyzes the transfer of the enolpyruvyl moiety of phosphoenolpyruvate (PEP) to the 5-hydroxyl of shikimate-3-phosphate (S3P) to produce enolpyruvyl shikimate-3-phosphate and inorganic phosphate. This is 3-phosphoshikimate 1-carboxyvinyltransferase from Haemophilus influenzae (strain ATCC 51907 / DSM 11121 / KW20 / Rd).